The primary structure comprises 621 residues: Amino-acid acetyltransferase, mitochondrial (621 aa).

A mitochondrion-targeting transit peptide spans 1 to 77; the sequence is MIPRAPPSTQ…RSYLASFGVQ (77 aa). A disordered region spans residues 213–233; that stretch reads PKPGSEEESEPGFSPPETHIY. The N-acetyltransferase domain maps to 424–600; that stretch reads LPIRVVRSVS…GSAGLSFIED (177 aa).

It belongs to the acetyltransferase family.

The protein localises to the mitochondrion. It catalyses the reaction L-glutamate + acetyl-CoA = N-acetyl-L-glutamate + CoA + H(+). It functions in the pathway amino-acid biosynthesis; L-arginine biosynthesis; N(2)-acetyl-L-ornithine from L-glutamate: step 1/4. Its function is as follows. N-acetylglutamate synthase involved in arginine biosynthesis. This is Amino-acid acetyltransferase, mitochondrial (ARG2) from Coprinopsis cinerea (strain Okayama-7 / 130 / ATCC MYA-4618 / FGSC 9003) (Inky cap fungus).